The primary structure comprises 151 residues: 3-hydroxyacyl-[acyl-carrier-protein] dehydratase FabZ (151 aa).

His56 is an active-site residue.

Belongs to the thioester dehydratase family. FabZ subfamily.

The protein resides in the cytoplasm. It carries out the reaction a (3R)-hydroxyacyl-[ACP] = a (2E)-enoyl-[ACP] + H2O. Its function is as follows. Involved in unsaturated fatty acids biosynthesis. Catalyzes the dehydration of short chain beta-hydroxyacyl-ACPs and long chain saturated and unsaturated beta-hydroxyacyl-ACPs. In Nitrobacter hamburgensis (strain DSM 10229 / NCIMB 13809 / X14), this protein is 3-hydroxyacyl-[acyl-carrier-protein] dehydratase FabZ.